Consider the following 446-residue polypeptide: 3',5'-cyclic-AMP phosphodiesterase 7B (446 aa).

Residues 97 to 420 (LDEDYLGQAR…AQWKSLLSNQ (324 aa)) enclose the PDEase domain. H173 acts as the Proton donor in catalysis. H177, H213, D214, and D323 together coordinate a divalent metal cation. Residues 422–446 (RRRGSGQDLAGPAPETLEQTEGATP) are disordered. S426 carries the phosphoserine modification. T445 is subject to Phosphothreonine.

The protein belongs to the cyclic nucleotide phosphodiesterase family. PDE7 subfamily. A divalent metal cation serves as cofactor. Highly expressed in brain.

It carries out the reaction 3',5'-cyclic AMP + H2O = AMP + H(+). It participates in purine metabolism; 3',5'-cyclic AMP degradation; AMP from 3',5'-cyclic AMP: step 1/1. Its activity is regulated as follows. Inhibited by dipyridamole, IBMX and SCH 51866. Insensitive to zaprinast, rolipram, and milrinone. Its function is as follows. Hydrolyzes the second messenger cAMP, which is a key regulator of many important physiological processes. May be involved in the control of cAMP-mediated neural activity and cAMP metabolism in the brain. The protein is 3',5'-cyclic-AMP phosphodiesterase 7B of Mus musculus (Mouse).